The primary structure comprises 61 residues: Metallothionein-1B (61 aa).

The beta stretch occupies residues 1–29 (MDPNCSCPTSGSCSCAGSCTCKACRCPSC). Positions 5, 7, 13, 15, 19, 21, 24, 26, 29, 33, 34, 36, 37, 41, 44, 48, 50, 57, 59, and 60 each coordinate a divalent metal cation. The segment at 30–61 (KKSCCSCCPVGCAKCAQGCVCKGASDKCSCCA) is alpha.

Belongs to the metallothionein superfamily. Type 1 family.

In terms of biological role, metallothioneins have a high content of cysteine residues that bind various heavy metals; these proteins are transcriptionally regulated by both heavy metals and glucocorticoids. This is Metallothionein-1B (MT1B) from Ovis aries (Sheep).